The following is a 385-amino-acid chain: Mitochondrial fission regulator 2 (385 aa).

Ser-2 carries the post-translational modification N-acetylserine. Ser-119 carries the phosphoserine modification. The interval 195–268 (SVDPDQLPGS…SHHSKSQRNK (74 aa)) is disordered. A compositionally biased stretch (pro residues) spans 207–216 (SPPPPPPLPP). The span at 231–257 (PGSNNICDSDNPATEMSKQNPAANKTN) shows a compositional bias: polar residues. Phosphoserine is present on residues Ser-291 and Ser-328. The interval 331-363 (KENRSWESSPFSSPETSRFGHHISQSEGQRTKE) is disordered. Residues 336–346 (WESSPFSSPET) are compositionally biased toward polar residues.

This sequence belongs to the MTFR1 family.

Its subcellular location is the mitochondrion. Functionally, may play a role in mitochondrial aerobic respiration essentially in the testis. Can also promote mitochondrial fission. The polypeptide is Mitochondrial fission regulator 2 (MTFR2) (Homo sapiens (Human)).